The following is a 495-amino-acid chain: Glycerol kinase (495 aa).

Thr-16 serves as a coordination point for ADP. Residues Thr-16 and Thr-17 each contribute to the ATP site. A sn-glycerol 3-phosphate-binding site is contributed by Thr-16. ADP is bound at residue Arg-20. Sn-glycerol 3-phosphate contacts are provided by Arg-86, Glu-87, Tyr-138, and Asp-246. Residues Arg-86, Glu-87, Tyr-138, Asp-246, and Gln-247 each coordinate glycerol. ADP is bound by residues Thr-268 and Gly-316. The ATP site is built by Thr-268, Gly-316, Gln-320, and Gly-417. Residues Gly-417 and Asn-421 each coordinate ADP.

The protein belongs to the FGGY kinase family.

It catalyses the reaction glycerol + ATP = sn-glycerol 3-phosphate + ADP + H(+). The protein operates within polyol metabolism; glycerol degradation via glycerol kinase pathway; sn-glycerol 3-phosphate from glycerol: step 1/1. With respect to regulation, inhibited by fructose 1,6-bisphosphate (FBP). Functionally, key enzyme in the regulation of glycerol uptake and metabolism. Catalyzes the phosphorylation of glycerol to yield sn-glycerol 3-phosphate. The protein is Glycerol kinase of Synechocystis sp. (strain ATCC 27184 / PCC 6803 / Kazusa).